The sequence spans 124 residues: MNWLLVIAGAMVGAPLRYVTDRMVQLRHDAVFPWGTFAINVTGCLVLGLLTGAASAGVASPHLELLLGTGLCGALTTYSTFSYETLRLTETGAGFYAAANAIASVAAGLGAAFAGVWFAQALWA.

The next 4 membrane-spanning stretches (helical) occupy residues 1-21, 30-50, 56-76, and 102-122; these read MNWL…YVTD, AVFP…LGLL, AGVA…GALT, and IASV…AQAL. 2 residues coordinate Na(+): Gly-73 and Thr-76.

It belongs to the fluoride channel Fluc/FEX (TC 1.A.43) family.

Its subcellular location is the cell membrane. It catalyses the reaction fluoride(in) = fluoride(out). Na(+) is not transported, but it plays an essential structural role and its presence is essential for fluoride channel function. Functionally, fluoride-specific ion channel. Important for reducing fluoride concentration in the cell, thus reducing its toxicity. The sequence is that of Fluoride-specific ion channel FluC 1 from Streptomyces avermitilis (strain ATCC 31267 / DSM 46492 / JCM 5070 / NBRC 14893 / NCIMB 12804 / NRRL 8165 / MA-4680).